The chain runs to 601 residues: Elongation factor 4 (601 aa).

One can recognise a tr-type G domain in the interval 6-188; it reads KFTRNFSIIA…AICYLLPPPV (183 aa). GTP is bound by residues 18–23 and 135–138; these read DHGKST and NKID.

This sequence belongs to the TRAFAC class translation factor GTPase superfamily. Classic translation factor GTPase family. LepA subfamily.

It is found in the cell inner membrane. It catalyses the reaction GTP + H2O = GDP + phosphate + H(+). Functionally, required for accurate and efficient protein synthesis under certain stress conditions. May act as a fidelity factor of the translation reaction, by catalyzing a one-codon backward translocation of tRNAs on improperly translocated ribosomes. Back-translocation proceeds from a post-translocation (POST) complex to a pre-translocation (PRE) complex, thus giving elongation factor G a second chance to translocate the tRNAs correctly. Binds to ribosomes in a GTP-dependent manner. This chain is Elongation factor 4, found in Leptospira biflexa serovar Patoc (strain Patoc 1 / Ames).